The sequence spans 337 residues: MKPYPIKFVSIVIPVYNERQSLPELLRRTEAACEQLDHRFEIVLVDDGSRDDSTDILQRAAERADSPFVAVILNRNYGQHAAIMAGFEQCQGDVVITLDADLQNPPEEIPRLVKLAEQGYDVVGTVRSNRQDSAWRRWPSKLINLAVQRSTGVAMNDYGCMLRAYRRTIVDAMLACRERSTFIPILANSFARHTTEVLVDHAEREHGDSKYSPMRLINLMFDLITCMTTTPLRLLSIIGFSMALLGVLFAALLIVLRLIFGASWAGDGMFVLFAVLFVFTGGQFIGMGLLGEYLGRMYSDVRARPRFFIEKIVRSSSPVATDSIDSSVTPYMNKVAP.

2 consecutive transmembrane segments (helical) span residues 235-255 (LSII…LLIV) and 270-290 (FVLF…MGLL).

The protein belongs to the glycosyltransferase 2 family.

The protein localises to the cell inner membrane. The enzyme catalyses UDP-4-deoxy-4-formamido-beta-L-arabinose + di-trans,octa-cis-undecaprenyl phosphate = 4-deoxy-4-formamido-alpha-L-arabinopyranosyl di-trans,octa-cis-undecaprenyl phosphate + UDP. It functions in the pathway glycolipid biosynthesis; 4-amino-4-deoxy-alpha-L-arabinose undecaprenyl phosphate biosynthesis; 4-amino-4-deoxy-alpha-L-arabinose undecaprenyl phosphate from UDP-4-deoxy-4-formamido-beta-L-arabinose and undecaprenyl phosphate: step 1/2. The protein operates within bacterial outer membrane biogenesis; lipopolysaccharide biosynthesis. Catalyzes the transfer of 4-deoxy-4-formamido-L-arabinose from UDP to undecaprenyl phosphate. The modified arabinose is attached to lipid A and is required for resistance to polymyxin and cationic antimicrobial peptides. This chain is Undecaprenyl-phosphate 4-deoxy-4-formamido-L-arabinose transferase, found in Pseudomonas syringae pv. syringae (strain B728a).